The sequence spans 351 residues: Phospho-N-acetylmuramoyl-pentapeptide-transferase (351 aa).

The next 10 helical transmembrane spans lie at 17 to 37, 62 to 82, 85 to 105, 130 to 150, 158 to 178, 190 to 210, 230 to 250, 254 to 274, 279 to 299, and 328 to 348; these read MAYATIFAFLLSLIVGPYIIL, GIPTMGGILIFFCVFISLVFW, ILNVYFLIMVFVMLGFAFLGF, IIFSFFSVGILYYFGGEHVSV, SFQIDLGLFYIPFGMFILISA, GLAIGLSIVITGALIIIAYLT, LVIFLGALLGGSFGFLWFNAY, IMMGDTGSLALGAILGMAALI, ILFSILAGVFIIETMSVIIQV, and QVVIRFWIIGLIFAIIALSTI.

Belongs to the glycosyltransferase 4 family. MraY subfamily. It depends on Mg(2+) as a cofactor.

The protein localises to the cell inner membrane. The catalysed reaction is UDP-N-acetyl-alpha-D-muramoyl-L-alanyl-gamma-D-glutamyl-meso-2,6-diaminopimeloyl-D-alanyl-D-alanine + di-trans,octa-cis-undecaprenyl phosphate = di-trans,octa-cis-undecaprenyl diphospho-N-acetyl-alpha-D-muramoyl-L-alanyl-D-glutamyl-meso-2,6-diaminopimeloyl-D-alanyl-D-alanine + UMP. It participates in cell wall biogenesis; peptidoglycan biosynthesis. Catalyzes the initial step of the lipid cycle reactions in the biosynthesis of the cell wall peptidoglycan: transfers peptidoglycan precursor phospho-MurNAc-pentapeptide from UDP-MurNAc-pentapeptide onto the lipid carrier undecaprenyl phosphate, yielding undecaprenyl-pyrophosphoryl-MurNAc-pentapeptide, known as lipid I. In Borreliella burgdorferi (strain ATCC 35210 / DSM 4680 / CIP 102532 / B31) (Borrelia burgdorferi), this protein is Phospho-N-acetylmuramoyl-pentapeptide-transferase.